A 191-amino-acid polypeptide reads, in one-letter code: Peptide methionine sulfoxide reductase MsrA (191 aa).

Cysteine 21 is an active-site residue.

It belongs to the MsrA Met sulfoxide reductase family.

It catalyses the reaction L-methionyl-[protein] + [thioredoxin]-disulfide + H2O = L-methionyl-(S)-S-oxide-[protein] + [thioredoxin]-dithiol. It carries out the reaction [thioredoxin]-disulfide + L-methionine + H2O = L-methionine (S)-S-oxide + [thioredoxin]-dithiol. Its function is as follows. Has an important function as a repair enzyme for proteins that have been inactivated by oxidation. Catalyzes the reversible oxidation-reduction of methionine sulfoxide in proteins to methionine. In Ralstonia nicotianae (strain ATCC BAA-1114 / GMI1000) (Ralstonia solanacearum), this protein is Peptide methionine sulfoxide reductase MsrA.